Here is a 129-residue protein sequence, read N- to C-terminus: UPF0212 protein MM_2357 (129 aa).

It belongs to the UPF0212 family.

This chain is UPF0212 protein MM_2357, found in Methanosarcina mazei (strain ATCC BAA-159 / DSM 3647 / Goe1 / Go1 / JCM 11833 / OCM 88) (Methanosarcina frisia).